The sequence spans 456 residues: Endoglucanase A (456 aa).

The N-terminal stretch at 1-30 (MSRIRRFLATALAAATAGVGAIVTAIASAG) is a signal peptide. The segment at 31–322 (PAHAYDSPFY…RAYELAMNAA (292 aa)) is catalytic. Residue Asp-113 is part of the active site. Disulfide bonds link Cys-114–Cys-159 and Cys-267–Cys-302. Asp-151 functions as the Proton donor in the catalytic mechanism. The tract at residues 255-280 (SRNGNGPLGSEWCDPPGRATGTWSTT) is disordered. Catalysis depends on Asp-300, which acts as the Nucleophile. Residues 321-358 (AAPPTYSPSPTPSTPSPSPSQSDPGSPSPSPSQPPAGR) are disordered. Residues 323–355 (PPTYSPSPTPSTPSPSPSQSDPGSPSPSPSQPP) are linker ('hinge') (Pro-Ser box). The segment covering 325–338 (TYSPSPTPSTPSPS) has biased composition (pro residues). The CBM2 domain maps to 353–456 (QPPAGRACEA…LSSSITCSAS (104 aa)). Cys-360 and Cys-453 are oxidised to a cystine.

Belongs to the glycosyl hydrolase 6 (cellulase B) family.

The enzyme catalyses Endohydrolysis of (1-&gt;4)-beta-D-glucosidic linkages in cellulose, lichenin and cereal beta-D-glucans.. The polypeptide is Endoglucanase A (celA) (Thermobispora bispora (Microbispora bispora)).